We begin with the raw amino-acid sequence, 270 residues long: Putative phosphoenolpyruvate synthase regulatory protein (270 aa).

ADP is bound at residue 150–157 (GVSRCGKT).

Belongs to the pyruvate, phosphate/water dikinase regulatory protein family. PSRP subfamily.

It carries out the reaction [pyruvate, water dikinase] + ADP = [pyruvate, water dikinase]-phosphate + AMP + H(+). The catalysed reaction is [pyruvate, water dikinase]-phosphate + phosphate + H(+) = [pyruvate, water dikinase] + diphosphate. In terms of biological role, bifunctional serine/threonine kinase and phosphorylase involved in the regulation of the phosphoenolpyruvate synthase (PEPS) by catalyzing its phosphorylation/dephosphorylation. The polypeptide is Putative phosphoenolpyruvate synthase regulatory protein (Shewanella frigidimarina (strain NCIMB 400)).